The primary structure comprises 612 residues: Alpha-1,3-galactosidase B (612 aa).

The N-terminal stretch at 1-19 is a signal peptide; the sequence is MKWYLWGAVVLLYSLFGSA. Cysteine 20 is lipidated: N-palmitoyl cysteine. Cysteine 20 is lipidated: S-diacylglycerol cysteine. PbH1 repeat units lie at residues 431–453, 454–476, and 487–536; these read TPTVLFSDNLIRNNRARGSLFST, PRQTVVENNVFDHTSGTAILLCG, and CRNV…VIDA.

Belongs to the glycosyl hydrolase 110 family. B subfamily.

The protein resides in the cell membrane. The enzyme catalyses Hydrolysis of terminal, non-reducing branched (1-&gt;3)-alpha-D-galactosidic residues, producing free D-galactose.. It catalyses the reaction Hydrolysis of terminal, non-reducing linear (1-&gt;3)-alpha-D-galactosidic residues, producing free D-galactose.. It carries out the reaction Hydrolysis of terminal, non-reducing alpha-D-galactose residues in alpha-D-galactosides, including galactose oligosaccharides, galactomannans and galactolipids.. In terms of biological role, alpha-galactosidase. Removes both branched alpha-1,3-linked galactose residues of blood group B antigens and linear alpha-1,3-linked galactose structures. This chain is Alpha-1,3-galactosidase B (glaB), found in Parabacteroides distasonis (strain ATCC 8503 / DSM 20701 / CIP 104284 / JCM 5825 / NCTC 11152).